The sequence spans 863 residues: MNLPEHGGNLIELSKKAGCNPKEILDFSANINPLGFPEWLRPFLHSKIEDLISYPDPNYTSLKKKIHSKYGICTEQIVLGNGASELILQIPFVVQADYALIAVPCYSGYKEAISLLKIPCIEVTLKEEKQFRLDINELRDVLKSKPDQKALVFLGHPNNPTGVTLDKIEVLKIVQEFQNSVFVIDESFIHFCTNESSFLKDKTENMILIQSMTKILALPGLRIGICYASPLICSNISKRLPTWNVNSIAASVYEKAISDEDYIENSKQNIKIWKEKLIYDLSNLEFLNLFSSEANFILIKILDNKNIFDLTQELLIKYKIAVRNCENFSGLSKNFIRIAVRTPEENKKIIDAFSNIFYGTRQRLKSRKKTPSIMFQGTASNVGKSILTAALCRILSQDGIKVAPFKSQNMALNSFVTLNGEEIGRAQALQAQAAKILPDIRMNPILLKPSNEKDSQVIINGKPLNSMNFKDYDQYKPIAFEEVKKSYDSLASEYNVIIIEGAGSASEVNLKKNDIVNMKMAEYAKADVLLVGNIDHGGLFGSLLGTMETLTEWERKLVFGFIINRFRGAKELLKTGINYIEEYTNKPILGIVPYIKNLKLPEEDSLEFKSGALDDTSKLEERLDVVLIDIPRISNHTDIDALRAEPDVRVRIVRTVEDLGEPDVLILPGSKNVISDLNHLYDVGLVNKIFALSRNQKTDIVGICGGYQMLGKNIFDPYRIESDQGSIQGISLLQIETILEKNKSLKRVFATHIPTKTEVEGYEIHHGKTKSIGNTRVILLNEKAEELGHSDPTGRIWGTYIHGIFDKDEFRRKYLDQIRIRKGKSPLVKVQVSYNLEKSLDRLARYVRQSLNINLIYRKLGLG.

The tract at residues 1-373 (MNLPEHGGNL…LKSRKKTPSI (373 aa)) is putative threonine-phosphate decarboxylase. O-phospho-L-threonine-binding positions include 6 to 7 (HG), Asn30, and Asn159. The residue at position 214 (Lys214) is an N6-(pyridoxal phosphate)lysine. Positions 323 and 337 each coordinate O-phospho-L-threonine. The interval 374–863 (MFQGTASNVG…NLIYRKLGLG (490 aa)) is cobyric acid synthase. Residues 622-810 (RLDVVLIDIP…IHGIFDKDEF (189 aa)) enclose the GATase cobBQ-type domain. Cys704 acts as the Nucleophile in catalysis. His802 is a catalytic residue.

This sequence in the N-terminal section; belongs to the class-II pyridoxal-phosphate-dependent aminotransferase family. It in the C-terminal section; belongs to the CobB/CobQ family. CobQ subfamily. Requires pyridoxal 5'-phosphate as cofactor.

It carries out the reaction O-phospho-L-threonine + H(+) = (R)-1-aminopropan-2-yl phosphate + CO2. Its pathway is cofactor biosynthesis; adenosylcobalamin biosynthesis. Its function is as follows. Catalyzes two activities which are involved in the adenosylcobalamin biosynthesis: decarboxylates L-threonine-O-3-phosphate to yield (R)-1-amino-2-propanol O-2-phosphate, the precursor for the linkage between the nucleotide loop and the corrin ring in cobalamin, and catalyzes amidations at positions B, D, E, and G on adenosylcobyrinic A,C-diamide. NH(2) groups are provided by glutamine, and one molecule of ATP is hydrogenolyzed for each amidation. The chain is Adenosylcobalamin biosynthesis bifunctional protein CobDQ (cobDQ) from Leptospira interrogans serogroup Icterohaemorrhagiae serovar Lai (strain 56601).